The following is a 331-amino-acid chain: Probable cytosolic iron-sulfur protein assembly protein Ciao1 (331 aa).

WD repeat units lie at residues 12–51, 57–96, 97–136, 142–181, 188–227, 246–285, and 297–331; these read GHKG…WTTK, GHKR…ATLE, GHEN…EFEC, AHSQ…SDWD, SHTS…NDAG, EHSR…KRDA, and AHEQ…KLQE.

The protein belongs to the WD repeat CIA1 family.

Functionally, essential component of the cytosolic iron-sulfur (Fe/S) protein assembly machinery. Required for the maturation of extramitochondrial Fe/S proteins. This chain is Probable cytosolic iron-sulfur protein assembly protein Ciao1, found in Drosophila virilis (Fruit fly).